A 530-amino-acid chain; its full sequence is Glucose-6-phosphate isomerase (530 aa).

Catalysis depends on Glu-356, which acts as the Proton donor. Catalysis depends on residues His-387 and Lys-502.

It belongs to the GPI family.

It is found in the cytoplasm. The enzyme catalyses alpha-D-glucose 6-phosphate = beta-D-fructose 6-phosphate. It functions in the pathway carbohydrate biosynthesis; gluconeogenesis. Its pathway is carbohydrate degradation; glycolysis; D-glyceraldehyde 3-phosphate and glycerone phosphate from D-glucose: step 2/4. Functionally, catalyzes the reversible isomerization of glucose-6-phosphate to fructose-6-phosphate. The chain is Glucose-6-phosphate isomerase from Borrelia garinii subsp. bavariensis (strain ATCC BAA-2496 / DSM 23469 / PBi) (Borreliella bavariensis).